We begin with the raw amino-acid sequence, 476 residues long: Cysteine--tRNA ligase (476 aa).

Residue Cys-28 participates in Zn(2+) binding. The short motif at 30 to 40 (VTTYDFCHIGH) is the 'HIGH' region element. 3 residues coordinate Zn(2+): Cys-215, His-241, and Glu-245. The short motif at 273–277 (KMSKS) is the 'KMSKS' region element. ATP is bound at residue Lys-276.

It belongs to the class-I aminoacyl-tRNA synthetase family. As to quaternary structure, monomer. Zn(2+) serves as cofactor.

It localises to the cytoplasm. The catalysed reaction is tRNA(Cys) + L-cysteine + ATP = L-cysteinyl-tRNA(Cys) + AMP + diphosphate. In Buchnera aphidicola subsp. Cinara cedri (strain Cc), this protein is Cysteine--tRNA ligase.